The chain runs to 155 residues: 6,7-dimethyl-8-ribityllumazine synthase (155 aa).

Residues phenylalanine 23, 57–59 (AFE), and 81–83 (AVI) contribute to the 5-amino-6-(D-ribitylamino)uracil site. Position 86–87 (86–87 (AT)) interacts with (2S)-2-hydroxy-3-oxobutyl phosphate. Histidine 89 functions as the Proton donor in the catalytic mechanism. Residue phenylalanine 114 participates in 5-amino-6-(D-ribitylamino)uracil binding. Arginine 128 is a (2S)-2-hydroxy-3-oxobutyl phosphate binding site.

The protein belongs to the DMRL synthase family.

The enzyme catalyses (2S)-2-hydroxy-3-oxobutyl phosphate + 5-amino-6-(D-ribitylamino)uracil = 6,7-dimethyl-8-(1-D-ribityl)lumazine + phosphate + 2 H2O + H(+). Its pathway is cofactor biosynthesis; riboflavin biosynthesis; riboflavin from 2-hydroxy-3-oxobutyl phosphate and 5-amino-6-(D-ribitylamino)uracil: step 1/2. Catalyzes the formation of 6,7-dimethyl-8-ribityllumazine by condensation of 5-amino-6-(D-ribitylamino)uracil with 3,4-dihydroxy-2-butanone 4-phosphate. This is the penultimate step in the biosynthesis of riboflavin. This chain is 6,7-dimethyl-8-ribityllumazine synthase, found in Geotalea daltonii (strain DSM 22248 / JCM 15807 / FRC-32) (Geobacter daltonii).